Consider the following 1194-residue polypeptide: Protein argonaute 3 (1194 aa).

The span at 1–98 shows a compositional bias: basic and acidic residues; that stretch reads MDRGGYRGGR…GRGGGGDRGR (98 aa). Disordered stretches follow at residues 1-277 and 299-341; these read MDRG…VSQS and TVLP…DKGG. Positions 142–158 are enriched in low complexity; sequence PPSSSQAQVSQGVAPGD. Over residues 167–180 the composition is skewed to basic and acidic residues; it reads VGRDGVGDVGRDGV. Gly residues predominate over residues 181–214; sequence GDVGQGGVGDVGQVGVGDVGQGGVGDVGQGGVGD. Basic and acidic residues predominate over residues 215 to 228; sequence VGRDGVGDVGRDGV. The segment covering 229–238 has biased composition (gly residues); that stretch reads GDVGRGGVGD. 2 stretches are compositionally biased toward low complexity: residues 256 to 277 and 299 to 316; these read QLQQ…VSQS and TVLP…HTAS. Residues 317–326 are compositionally biased toward polar residues; the sequence is GSQVMTPKPS. Positions 327-341 are enriched in basic and acidic residues; that stretch reads SSDKKEPVKRPDKGG. Positions 540–656 constitute a PAZ domain; it reads SVIEYLKLYF…VPMEFCNLVE (117 aa). The Piwi domain occupies 841–1145; it reads LVLCAMTGKH…AASRGRVYYE (305 aa).

This sequence belongs to the argonaute family. Ago subfamily.

Involved in RNA-mediated post-transcriptional gene silencing (PTGS). Main component of the RNA-induced silencing complex (RISC) that binds to a short guide RNA such as a microRNA (miRNA) or small interfering RNA (siRNA). RISC uses the mature miRNA or siRNA as a guide for slicer-directed cleavage of homologous mRNAs to repress gene expression. This chain is Protein argonaute 3 (AGO3), found in Arabidopsis thaliana (Mouse-ear cress).